The sequence spans 48 residues: Large ribosomal subunit protein bL32 (48 aa).

A compositionally biased stretch (basic residues) spans 1–20 (MAVPKRRVSKTRAAKRRTHY). The tract at residues 1–48 (MAVPKRRVSKTRAAKRRTHYKVSLPMPVKDKDGSYKMPHRANPTTKEY) is disordered.

This sequence belongs to the bacterial ribosomal protein bL32 family.

In Campylobacter jejuni subsp. doylei (strain ATCC BAA-1458 / RM4099 / 269.97), this protein is Large ribosomal subunit protein bL32.